The following is a 401-amino-acid chain: Chromate transport protein (401 aa).

A run of 12 helical transmembrane segments spans residues leucine 26–glycine 46, glycine 67–glycine 87, isoleucine 93–alanine 113, leucine 124–isoleucine 144, valine 172–tryptophan 192, alanine 214–phenylalanine 234, alanine 237–valine 257, valine 272–alanine 294, alanine 299–phenylalanine 321, isoleucine 330–isoleucine 350, serine 356–phenylalanine 376, and leucine 379–leucine 399.

This sequence belongs to the chromate ion transporter (CHR) (TC 2.A.51) family.

It localises to the cell inner membrane. This protein reduces chromate accumulation and is essential for chromate resistance. In Cupriavidus metallidurans (strain ATCC 43123 / DSM 2839 / NBRC 102507 / CH34) (Ralstonia metallidurans), this protein is Chromate transport protein.